We begin with the raw amino-acid sequence, 425 residues long: Serine--tRNA ligase (425 aa).

Disordered stretches follow at residues 43 to 68 and 108 to 131; these read QRSS…GSDP and LPNL…RHCW. Residues 117–131 are compositionally biased toward basic and acidic residues; that stretch reads PEGRDENDNQERHCW. 233–235 is a binding site for L-serine; the sequence is TAE. Residue 264 to 266 participates in ATP binding; that stretch reads RRE. Glu287 lines the L-serine pocket. Residue 351 to 354 coordinates ATP; the sequence is EISS. Ser385 serves as a coordination point for L-serine.

Belongs to the class-II aminoacyl-tRNA synthetase family. Type-1 seryl-tRNA synthetase subfamily. As to quaternary structure, homodimer. The tRNA molecule binds across the dimer.

The protein resides in the cytoplasm. The catalysed reaction is tRNA(Ser) + L-serine + ATP = L-seryl-tRNA(Ser) + AMP + diphosphate + H(+). It carries out the reaction tRNA(Sec) + L-serine + ATP = L-seryl-tRNA(Sec) + AMP + diphosphate + H(+). The protein operates within aminoacyl-tRNA biosynthesis; selenocysteinyl-tRNA(Sec) biosynthesis; L-seryl-tRNA(Sec) from L-serine and tRNA(Sec): step 1/1. Its function is as follows. Catalyzes the attachment of serine to tRNA(Ser). Is also able to aminoacylate tRNA(Sec) with serine, to form the misacylated tRNA L-seryl-tRNA(Sec), which will be further converted into selenocysteinyl-tRNA(Sec). The polypeptide is Serine--tRNA ligase (Prochlorococcus marinus (strain MIT 9303)).